The following is a 406-amino-acid chain: Putative cyclin-F3-2 (406 aa).

The tract at residues Met1–Leu107 is disordered. Low complexity-rich tracts occupy residues Arg11–Ala21 and Asn29–Glu57.

Belongs to the cyclin family. Cyclin F subfamily.

This chain is Putative cyclin-F3-2 (CYCF3-2), found in Oryza sativa subsp. japonica (Rice).